A 378-amino-acid polypeptide reads, in one-letter code: Erythronate-4-phosphate dehydrogenase (378 aa).

Residues Ser-45 and Thr-66 each contribute to the substrate site. Positions 146 and 175 each coordinate NAD(+). The active site involves Arg-208. Residue Asp-232 participates in NAD(+) binding. Residue Glu-237 is part of the active site. The active-site Proton donor is the His-254. Gly-257 is an NAD(+) binding site. Tyr-258 is a binding site for substrate.

It belongs to the D-isomer specific 2-hydroxyacid dehydrogenase family. PdxB subfamily. Homodimer.

The protein resides in the cytoplasm. It catalyses the reaction 4-phospho-D-erythronate + NAD(+) = (R)-3-hydroxy-2-oxo-4-phosphooxybutanoate + NADH + H(+). Its pathway is cofactor biosynthesis; pyridoxine 5'-phosphate biosynthesis; pyridoxine 5'-phosphate from D-erythrose 4-phosphate: step 2/5. Catalyzes the oxidation of erythronate-4-phosphate to 3-hydroxy-2-oxo-4-phosphonooxybutanoate. The protein is Erythronate-4-phosphate dehydrogenase of Escherichia coli O81 (strain ED1a).